The chain runs to 131 residues: MSTKTNEILDILKSITLLEAAELVSQIEETFGVDASAPVGGGFMAAPGGAGTAAAEIVEEKTTFDVIIEDVASDKRVPVLKVVRNLTSLDLKEAKEAITSLPKVIQQGVSKDDAEASKKQLEDAGAKVKIS.

The disordered stretch occupies residues 107-131 (QGVSKDDAEASKKQLEDAGAKVKIS). Residues 110-131 (SKDDAEASKKQLEDAGAKVKIS) are compositionally biased toward basic and acidic residues.

Belongs to the bacterial ribosomal protein bL12 family. Homodimer. Part of the ribosomal stalk of the 50S ribosomal subunit. Forms a multimeric L10(L12)X complex, where L10 forms an elongated spine to which 2 to 4 L12 dimers bind in a sequential fashion. Binds GTP-bound translation factors.

It localises to the plastid. The protein localises to the chloroplast. Its function is as follows. Forms part of the ribosomal stalk which helps the ribosome interact with GTP-bound translation factors. Is thus essential for accurate translation. The polypeptide is Large ribosomal subunit protein bL12c (Chlorella vulgaris (Green alga)).